The sequence spans 158 residues: Globin CTT-I/CTT-IA (158 aa).

Positions 1 to 15 (MKFLILALCVAAAMA) are cleaved as a signal peptide. One can recognise a Globin domain in the interval 16-158 (GPSGDQIAAA…FVFSTLKNEL (143 aa)). Heme b contacts are provided by His-74 and His-109.

Belongs to the globin family. Monomer.

The protein is Globin CTT-I/CTT-IA (CTT-1) of Chironomus thummi thummi (Midge).